The primary structure comprises 318 residues: uncharacterized protein (318 aa).

This is an uncharacterized protein from Schizosaccharomyces pombe (strain 972 / ATCC 24843) (Fission yeast).